Reading from the N-terminus, the 666-residue chain is MLRRAVELVWLIPILPFIGAFLVGFGLISFNKKVNQLRKPAALLLISSVGISAVLSFMVLADQIGGAPCSEVLFSWASAGTFNLEMGYRVDPIGATMLALVSTVAILVMVYSDGYMSHDKSYVRFFTYLGLFTSSMLALILSPNLLEIYVFWELVGMCSYLLIGFWYEREDAANAAQKAFVVNRVGDFGFLLGILGLFWATNSFDFQIVATKMAASISDGSIPHWAAIALCLLLFMGPMAKSAQFPLHVWLPDAMEGPTPISALIHAATMVAAGVFLVARLEPLYSQVPDVQIIVAVIGTITCFLGASIALIQMDLKKGLAYSTISQLGYMMLAMGCGAPVAGMFHLITHAFFKAMLFLGSGSVIHAMEEVVGHDPTLAQDMRLMGGLRKTMPITGITFFIGCVAISGIPPLAGFWSKDEILSKAFDSYPLLWGVGLFTAGLTAFYMFRLYFLTFEGEFRGNNIALREKLLIAAGKSFDPIETKEIQSTHESGWQMTLPLVILSVPSVLIGFLGSPWNNRFGMLLYPEEALEAAKTFSWGEFLPLAIASVMISTCGIVIATIAYAYHWIDLGQSVASRLKIINNFLVNKWYLDKINEYIFVNGSRGLAKKILNLDETVLDKAVVETGLTTLDAGKWLSYFETGRPQFYALIIFGGVISLIVIFNRL.

15 helical membrane-spanning segments follow: residues 8–28, 41–61, 90–110, 121–141, 145–165, 190–210, 220–240, 259–279, 293–313, 328–348, 396–416, 428–448, 497–517, 542–562, and 643–663; these read LVWL…FGLI, AALL…MVLA, VDPI…LVMV, SYVR…ALIL, LLEI…LIGF, FLLG…QIVA, GSIP…GPMA, TPIS…FLVA, IIVA…ALIQ, LGYM…FHLI, GITF…AGFW, SYPL…FYMF, TLPL…GSPW, FLPL…IATI, and GRPQ…IVIF.

The protein belongs to the complex I subunit 5 family. NDH is composed of at least 16 different subunits, 5 of which are encoded in the nucleus.

The protein localises to the plastid. The protein resides in the organellar chromatophore thylakoid membrane. It carries out the reaction a plastoquinone + NADH + (n+1) H(+)(in) = a plastoquinol + NAD(+) + n H(+)(out). The enzyme catalyses a plastoquinone + NADPH + (n+1) H(+)(in) = a plastoquinol + NADP(+) + n H(+)(out). Functionally, NDH shuttles electrons from NAD(P)H:plastoquinone, via FMN and iron-sulfur (Fe-S) centers, to quinones in the photosynthetic chain and possibly in a chloroplast respiratory chain. The immediate electron acceptor for the enzyme in this species is believed to be plastoquinone. Couples the redox reaction to proton translocation, and thus conserves the redox energy in a proton gradient. In Paulinella chromatophora, this protein is NAD(P)H-quinone oxidoreductase subunit 5, organellar chromatophore 1 (ndhF1).